The sequence spans 99 residues: Malonate decarboxylase acyl carrier protein (99 aa).

S25 is subject to O-(phosphoribosyl dephospho-coenzyme A)serine.

The protein belongs to the MdcC family. In terms of processing, covalently binds the prosthetic group of malonate decarboxylase.

It is found in the cytoplasm. Functionally, subunit of malonate decarboxylase, it is an acyl carrier protein to which acetyl and malonyl thioester residues are bound via a 2'-(5''-phosphoribosyl)-3'-dephospho-CoA prosthetic group and turn over during the catalytic mechanism. The chain is Malonate decarboxylase acyl carrier protein from Pseudomonas aeruginosa (strain UCBPP-PA14).